Consider the following 317-residue polypeptide: L-lactate dehydrogenase (317 aa).

Positions 16, 37, and 68 each coordinate NAD(+). Substrate-binding positions include glutamine 85, arginine 91, 123–126 (NPCD), and 151–154 (DSAR). Residue 121-123 (ASN) participates in NAD(+) binding. The Proton acceptor role is filled by histidine 178. The residue at position 222 (tyrosine 222) is a Phosphotyrosine. Threonine 231 contacts substrate.

Belongs to the LDH/MDH superfamily. LDH family. In terms of assembly, homotetramer.

It localises to the cytoplasm. The catalysed reaction is (S)-lactate + NAD(+) = pyruvate + NADH + H(+). The protein operates within fermentation; pyruvate fermentation to lactate; (S)-lactate from pyruvate: step 1/1. Catalyzes the conversion of lactate to pyruvate. This Mesoplasma florum (strain ATCC 33453 / NBRC 100688 / NCTC 11704 / L1) (Acholeplasma florum) protein is L-lactate dehydrogenase.